The chain runs to 347 residues: NADH-ubiquinone oxidoreductase chain 2 (347 aa).

A run of 9 helical transmembrane segments spans residues 3-23 (PPILIIIMFTVISGTIMVLMS), 25-45 (HWLMIWIGFEMNMLAIIPILM), 67-87 (SMLLMLGIIMNLLLTGQWAVL), 150-170 (NPHLLMTMALMSVLVGGWGGL), 178-198 (ILAYSSIAHMGWMIAVMTYSP), 201-221 (MLLNLSIYITMTLGTFMLFMF), 237-257 (LPLITSLILIIMLSLGGLPPL), 274-294 (NMIITTMLMTITALLNLYFYM), and 323-343 (MTMLPPLIVISTMLLPLTPMM).

It belongs to the complex I subunit 2 family. Core subunit of respiratory chain NADH dehydrogenase (Complex I) which is composed of 45 different subunits. Interacts with TMEM242.

It localises to the mitochondrion inner membrane. It carries out the reaction a ubiquinone + NADH + 5 H(+)(in) = a ubiquinol + NAD(+) + 4 H(+)(out). Core subunit of the mitochondrial membrane respiratory chain NADH dehydrogenase (Complex I) which catalyzes electron transfer from NADH through the respiratory chain, using ubiquinone as an electron acceptor. Essential for the catalytic activity and assembly of complex I. The chain is NADH-ubiquinone oxidoreductase chain 2 from Mustela kathiah (Yellow-bellied weasel).